Consider the following 152-residue polypeptide: uncharacterized protein (152 aa).

The disordered stretch occupies residues 127 to 152; it reads EKEKAERKAEKAKKNKKKSSTKTKKK. A compositionally biased stretch (basic residues) spans 136-152; sequence EKAKKNKKKSSTKTKKK.

This sequence belongs to the mimivirus R546 family.

This is an uncharacterized protein from Sputnik virophage.